A 90-amino-acid polypeptide reads, in one-letter code: Small ribosomal subunit protein bS20 (90 aa).

It belongs to the bacterial ribosomal protein bS20 family.

Its function is as follows. Binds directly to 16S ribosomal RNA. This is Small ribosomal subunit protein bS20 from Roseiflexus sp. (strain RS-1).